The following is a 163-amino-acid chain: Nucleotide-binding protein ESA_02876 (163 aa).

The protein belongs to the YajQ family.

Nucleotide-binding protein. The sequence is that of Nucleotide-binding protein ESA_02876 from Cronobacter sakazakii (strain ATCC BAA-894) (Enterobacter sakazakii).